Reading from the N-terminus, the 218-residue chain is YlmG homolog protein 1-2, chloroplastic (218 aa).

The transit peptide at 1-83 (MASFTTNSLA…TRSITTLVLL (83 aa)) directs the protein to the chloroplast. 2 helical membrane passes run 133–153 (LTVV…VLMV) and 187–207 (IIPP…AVLG).

Belongs to the YggT family.

It is found in the plastid. The protein localises to the chloroplast thylakoid membrane. Functionally, not required for the biogenesis and accumulation of native cytochrome b6 in the thylakoid membrane. Not functionally involved in the pathway for covalent binding of the c-type heme to cytochrome b6. The sequence is that of YlmG homolog protein 1-2, chloroplastic from Arabidopsis thaliana (Mouse-ear cress).